A 310-amino-acid polypeptide reads, in one-letter code: Aspartate carbamoyltransferase catalytic subunit (310 aa).

The carbamoyl phosphate site is built by R57 and T58. K86 is an L-aspartate binding site. Carbamoyl phosphate contacts are provided by R107, H135, and Q138. L-aspartate is bound by residues R168 and R229. The carbamoyl phosphate site is built by L268 and P269.

The protein belongs to the aspartate/ornithine carbamoyltransferase superfamily. ATCase family. Heterooligomer of catalytic and regulatory chains.

The enzyme catalyses carbamoyl phosphate + L-aspartate = N-carbamoyl-L-aspartate + phosphate + H(+). It functions in the pathway pyrimidine metabolism; UMP biosynthesis via de novo pathway; (S)-dihydroorotate from bicarbonate: step 2/3. Catalyzes the condensation of carbamoyl phosphate and aspartate to form carbamoyl aspartate and inorganic phosphate, the committed step in the de novo pyrimidine nucleotide biosynthesis pathway. In Thermococcus onnurineus (strain NA1), this protein is Aspartate carbamoyltransferase catalytic subunit.